The sequence spans 142 residues: Transcriptional regulator MraZ (142 aa).

SpoVT-AbrB domains follow at residues 5–51 (ASSL…PRPE) and 77–120 (AMDV…DKAT).

The protein belongs to the MraZ family. Forms oligomers.

Its subcellular location is the cytoplasm. It localises to the nucleoid. This Acidovorax ebreus (strain TPSY) (Diaphorobacter sp. (strain TPSY)) protein is Transcriptional regulator MraZ.